The following is a 100-amino-acid chain: uncharacterized protein (100 aa).

The next 3 helical transmembrane spans lie at 7–28 (TLIG…LLSL), 38–60 (AQLS…ILII), and 65–87 (LSAL…ANGV).

The protein resides in the cell membrane. This is an uncharacterized protein from Archaeoglobus fulgidus (strain ATCC 49558 / DSM 4304 / JCM 9628 / NBRC 100126 / VC-16).